The following is a 37-amino-acid chain: MKVRPSVKKMCEKCRVIRRRGRVMVICSNPKHKQRQG.

This sequence belongs to the bacterial ribosomal protein bL36 family.

This is Large ribosomal subunit protein bL36 from Gloeothece citriformis (strain PCC 7424) (Cyanothece sp. (strain PCC 7424)).